A 294-amino-acid polypeptide reads, in one-letter code: GTP cyclohydrolase FolE2 (294 aa).

It belongs to the GTP cyclohydrolase IV family.

It catalyses the reaction GTP + H2O = 7,8-dihydroneopterin 3'-triphosphate + formate + H(+). Its pathway is cofactor biosynthesis; 7,8-dihydroneopterin triphosphate biosynthesis; 7,8-dihydroneopterin triphosphate from GTP: step 1/1. Its function is as follows. Converts GTP to 7,8-dihydroneopterin triphosphate. This Acinetobacter baylyi (strain ATCC 33305 / BD413 / ADP1) protein is GTP cyclohydrolase FolE2.